The primary structure comprises 350 residues: GTPase Obg (350 aa).

One can recognise an Obg domain in the interval 1 to 159 (MKLVDEAEIE…RTLKLELKLL (159 aa)). Positions 127–147 (NMHFKSSTNRSPRQALPGEPG) are disordered. Residues 160–337 (ADVGLLGFPN…IMSRIMAFFD (178 aa)) enclose the OBG-type G domain. Residues 166–173 (GFPNAGKS), 191–195 (FTTLY), 213–216 (DIPG), 287–290 (NKAD), and 318–320 (SAL) each bind GTP. Mg(2+) is bound by residues Ser-173 and Thr-193.

This sequence belongs to the TRAFAC class OBG-HflX-like GTPase superfamily. OBG GTPase family. In terms of assembly, monomer. The cofactor is Mg(2+).

It is found in the cytoplasm. An essential GTPase which binds GTP, GDP and possibly (p)ppGpp with moderate affinity, with high nucleotide exchange rates and a fairly low GTP hydrolysis rate. Plays a role in control of the cell cycle, stress response, ribosome biogenesis and in those bacteria that undergo differentiation, in morphogenesis control. The sequence is that of GTPase Obg from Stenotrophomonas maltophilia (strain R551-3).